An 81-amino-acid polypeptide reads, in one-letter code: Sec-independent protein translocase protein TatA (81 aa).

A helical transmembrane segment spans residues 1-21 (MGMPSGQELLIILAIVVLLFG). Positions 45–81 (NEDDDTEVKSASTEAPKKVESAEEVASKESSKTPTQA) are disordered. The segment covering 59-75 (APKKVESAEEVASKESS) has biased composition (basic and acidic residues).

This sequence belongs to the TatA/E family. As to quaternary structure, the Tat system comprises two distinct complexes: a TatABC complex, containing multiple copies of TatA, TatB and TatC subunits, and a separate TatA complex, containing only TatA subunits. Substrates initially bind to the TatABC complex, which probably triggers association of the separate TatA complex to form the active translocon.

It is found in the cell inner membrane. Its function is as follows. Part of the twin-arginine translocation (Tat) system that transports large folded proteins containing a characteristic twin-arginine motif in their signal peptide across membranes. TatA could form the protein-conducting channel of the Tat system. The sequence is that of Sec-independent protein translocase protein TatA from Sulfurimonas denitrificans (strain ATCC 33889 / DSM 1251) (Thiomicrospira denitrificans (strain ATCC 33889 / DSM 1251)).